The sequence spans 327 residues: Aldo-keto reductase family 1 member A1 (327 aa).

NADP(+) is bound by residues 13-22 (GQKIPLIGLG), threonine 23, tryptophan 24, and aspartate 47. Catalysis depends on tyrosine 52, which acts as the Proton donor. Positions 164, 165, 213, 215, 217, 265, 266, 267, 268, 271, 274, and 275 each coordinate NADP(+).

This sequence belongs to the aldo/keto reductase family.

It is found in the cytoplasm. Its subcellular location is the cytosol. It localises to the apical cell membrane. It catalyses the reaction a primary alcohol + NADP(+) = an aldehyde + NADPH + H(+). The catalysed reaction is S-nitroso-CoA + NADPH + H(+) = sulfinamide-CoA + NADP(+). It carries out the reaction S-nitrosoglutathione + NADPH + H(+) = S-(hydroxysulfenamide)glutathione + NADP(+). Catalyzes the NADPH-dependent reduction of a wide variety of carbonyl-containing compounds to their corresponding alcohols. Displays enzymatic activity towards endogenous metabolites such as aromatic and aliphatic aldehydes, ketones, monosaccharides and bile acids. Acts as an aldehyde-detoxification enzyme. Also acts as an inhibitor of protein S-nitrosylation by mediating degradation of S-nitroso-coenzyme A (S-nitroso-CoA), a cofactor required to S-nitrosylate proteins. Also acts as a S-nitroso-glutathione reductase by catalyzing the NADPH-dependent reduction of S-nitrosoglutathione. Displays no reductase activity towards retinoids. This chain is Aldo-keto reductase family 1 member A1 (akr1a1), found in Xenopus tropicalis (Western clawed frog).